The sequence spans 34 residues: Photosystem II reaction center protein M (34 aa).

Residues 5 to 25 (ILAVIATALFVLIPTAFLLIL) form a helical membrane-spanning segment.

The protein belongs to the PsbM family. As to quaternary structure, PSII is composed of 1 copy each of membrane proteins PsbA, PsbB, PsbC, PsbD, PsbE, PsbF, PsbH, PsbI, PsbJ, PsbK, PsbL, PsbM, PsbT, PsbX, PsbY, PsbZ, Psb30/Ycf12, at least 3 peripheral proteins of the oxygen-evolving complex and a large number of cofactors. It forms dimeric complexes.

It is found in the plastid. The protein resides in the chloroplast thylakoid membrane. In terms of biological role, one of the components of the core complex of photosystem II (PSII). PSII is a light-driven water:plastoquinone oxidoreductase that uses light energy to abstract electrons from H(2)O, generating O(2) and a proton gradient subsequently used for ATP formation. It consists of a core antenna complex that captures photons, and an electron transfer chain that converts photonic excitation into a charge separation. This subunit is found at the monomer-monomer interface. The sequence is that of Photosystem II reaction center protein M from Chaetosphaeridium globosum (Charophycean green alga).